A 132-amino-acid chain; its full sequence is uncharacterized protein (132 aa).

The next 4 helical transmembrane spans lie at 15–37, 49–71, 81–103, and 110–129; these read FPEYVAFVVSLSYALNATLLLLY, AFIPVTLSFVAIDFTSIQGLRLF, VILTSLCILEGLALALTSSLALV, and LAATWIAANVASSGLFMAFV.

It localises to the cell membrane. This is an uncharacterized protein from Archaeoglobus fulgidus (strain ATCC 49558 / DSM 4304 / JCM 9628 / NBRC 100126 / VC-16).